Here is a 349-residue protein sequence, read N- to C-terminus: Alanine racemase (349 aa).

Lys35 acts as the Proton acceptor; specific for D-alanine in catalysis. Lys35 is subject to N6-(pyridoxal phosphate)lysine. Arg130 contacts substrate. The Proton acceptor; specific for L-alanine role is filled by Tyr244. Substrate is bound at residue Met292.

Belongs to the alanine racemase family. The cofactor is pyridoxal 5'-phosphate.

It carries out the reaction L-alanine = D-alanine. The protein operates within amino-acid biosynthesis; D-alanine biosynthesis; D-alanine from L-alanine: step 1/1. Catalyzes the interconversion of L-alanine and D-alanine. May also act on other amino acids. The polypeptide is Alanine racemase (alr) (Cereibacter sphaeroides (strain KD131 / KCTC 12085) (Rhodobacter sphaeroides)).